The following is a 103-amino-acid chain: Large ribosomal subunit protein bL21 (103 aa).

This sequence belongs to the bacterial ribosomal protein bL21 family. As to quaternary structure, part of the 50S ribosomal subunit. Contacts protein L20.

This protein binds to 23S rRNA in the presence of protein L20. The chain is Large ribosomal subunit protein bL21 from Hahella chejuensis (strain KCTC 2396).